Reading from the N-terminus, the 55-residue chain is Small ribosomal subunit protein eS31 (55 aa).

Residues Cys21, Cys24, Cys39, and Cys42 each contribute to the Zn(2+) site. Residues 21 to 42 (CPRCGPGVFLAEHADRFTCGRC) form a C4-type zinc finger.

The protein belongs to the eukaryotic ribosomal protein eS31 family. Part of the 30S ribosomal subunit. It depends on Zn(2+) as a cofactor.

This is Small ribosomal subunit protein eS31 from Thermoplasma volcanium (strain ATCC 51530 / DSM 4299 / JCM 9571 / NBRC 15438 / GSS1).